Consider the following 326-residue polypeptide: Phospho-N-acetylmuramoyl-pentapeptide-transferase (326 aa).

9 consecutive transmembrane segments (helical) span residues 3 to 23, 51 to 71, 79 to 99, 115 to 135, 138 to 158, 169 to 189, 195 to 215, 221 to 243, and 306 to 326; these read ISIS…PAFI, TMGG…FALF, VGMI…DDFL, LALQ…GGDI, VFGY…FWLV, GVDG…GVIA, MDIL…FIFN, VFMG…MALH, and FFFW…LYLM.

Belongs to the glycosyltransferase 4 family. MraY subfamily. It depends on Mg(2+) as a cofactor.

It localises to the cell membrane. The enzyme catalyses UDP-N-acetyl-alpha-D-muramoyl-L-alanyl-gamma-D-glutamyl-L-lysyl-D-alanyl-D-alanine + di-trans,octa-cis-undecaprenyl phosphate = Mur2Ac(oyl-L-Ala-gamma-D-Glu-L-Lys-D-Ala-D-Ala)-di-trans,octa-cis-undecaprenyl diphosphate + UMP. It functions in the pathway cell wall biogenesis; peptidoglycan biosynthesis. Catalyzes the initial step of the lipid cycle reactions in the biosynthesis of the cell wall peptidoglycan: transfers peptidoglycan precursor phospho-MurNAc-pentapeptide from UDP-MurNAc-pentapeptide onto the lipid carrier undecaprenyl phosphate, yielding undecaprenyl-pyrophosphoryl-MurNAc-pentapeptide, known as lipid I. The chain is Phospho-N-acetylmuramoyl-pentapeptide-transferase from Streptococcus pneumoniae serotype 2 (strain D39 / NCTC 7466).